We begin with the raw amino-acid sequence, 409 residues long: Aspartate aminotransferase, cytoplasmic (409 aa).

Residue serine 2 is modified to N-acetylserine. Residues glycine 38, tryptophan 138, and asparagine 191 each coordinate L-aspartate. The residue at position 255 (lysine 255) is an N6-(pyridoxal phosphate)lysine. Arginine 383 lines the L-aspartate pocket. Phosphoserine is present on serine 385.

It belongs to the class-I pyridoxal-phosphate-dependent aminotransferase family. As to quaternary structure, homodimer. Pyridoxal 5'-phosphate serves as cofactor.

It localises to the cytoplasm. The catalysed reaction is L-aspartate + 2-oxoglutarate = oxaloacetate + L-glutamate. Functionally, plays a key role in amino acid metabolism. This chain is Aspartate aminotransferase, cytoplasmic, found in Schizosaccharomyces pombe (strain 972 / ATCC 24843) (Fission yeast).